A 233-amino-acid chain; its full sequence is Leucyl/phenylalanyl-tRNA--protein transferase (233 aa).

It belongs to the L/F-transferase family.

The protein localises to the cytoplasm. The enzyme catalyses N-terminal L-lysyl-[protein] + L-leucyl-tRNA(Leu) = N-terminal L-leucyl-L-lysyl-[protein] + tRNA(Leu) + H(+). It catalyses the reaction N-terminal L-arginyl-[protein] + L-leucyl-tRNA(Leu) = N-terminal L-leucyl-L-arginyl-[protein] + tRNA(Leu) + H(+). The catalysed reaction is L-phenylalanyl-tRNA(Phe) + an N-terminal L-alpha-aminoacyl-[protein] = an N-terminal L-phenylalanyl-L-alpha-aminoacyl-[protein] + tRNA(Phe). Functions in the N-end rule pathway of protein degradation where it conjugates Leu, Phe and, less efficiently, Met from aminoacyl-tRNAs to the N-termini of proteins containing an N-terminal arginine or lysine. The sequence is that of Leucyl/phenylalanyl-tRNA--protein transferase from Laribacter hongkongensis (strain HLHK9).